The primary structure comprises 515 residues: Cytosolic Fe-S cluster assembly factor NAR1 homolog (515 aa).

[4Fe-4S] cluster-binding residues include C19, C65, C68, C71, C192, C247, C428, and C432.

The protein belongs to the NARF family.

Component of the cytosolic Fe/S protein assembly machinery. Required for maturation of extramitochondrial Fe/S proteins. May play a role in the transfer of pre-assembled Fe/S clusters to target apoproteins. This chain is Cytosolic Fe-S cluster assembly factor NAR1 homolog, found in Schizosaccharomyces japonicus (strain yFS275 / FY16936) (Fission yeast).